The chain runs to 142 residues: Large ribosomal subunit protein uL24 (142 aa).

Residues M1–S11 show a composition bias toward polar residues. A disordered region spans residues M1–H24.

It belongs to the universal ribosomal protein uL24 family.

In Caenorhabditis elegans, this protein is Large ribosomal subunit protein uL24 (rpl-26).